A 259-amino-acid chain; its full sequence is Emerin (259 aa).

Met1 carries the N-acetylmethionine modification. The region spanning 1 to 45 (MDDYAVLSDTELAAVLRQYNIPHGPIVGSTRKLYEKKIFEYETQR) is the LEM domain. 8 positions are modified to phosphoserine: Ser8, Ser29, Ser54, Ser72, Ser88, Ser99, Ser141, and Ser142. An interaction with F-actin region spans residues 46–223 (RRLLPPNSSS…PAAALGQDRQ (178 aa)). At Tyr161 the chain carries Phosphotyrosine. Residues 168–187 (RPISNVSRSSLGLSYYPTSS) are interaction with CTNNB1. Phosphoserine is present on residues Ser171, Ser174, and Ser176. A helical membrane pass occupies residues 224–244 (VPLWGQLLLFLVFAAFLLFVY).

As to quaternary structure, interacts with lamins A and C, BANF1, GMCL, BCLAF1 and YTHDC1/YT521. Interacts with TMEM43; the interaction retains emerin in the inner nuclear membrane. Interacts with ACTB, SPTAN1, F-actin, CTNNB1 and beta-tubulin. Interacts with SUN1 and SUN2. Interacts with TMEM201. Interacts with NEMP1. As to expression, in the ovary, highest expression is seen in primordial follicle oocytes (at protein level). Detected in embryonic fibroblasts, skeletal muscle, heart muscle and tongue epithelium (at protein level). Widely expressed.

It localises to the nucleus inner membrane. It is found in the nucleus outer membrane. In terms of biological role, stabilizes and promotes the formation of a nuclear actin cortical network. Stimulates actin polymerization in vitro by binding and stabilizing the pointed end of growing filaments. Inhibits beta-catenin activity by preventing its accumulation in the nucleus. Acts by influencing the nuclear accumulation of beta-catenin through a CRM1-dependent export pathway. Links centrosomes to the nuclear envelope via a microtubule association. Required for proper localization of non-farnesylated prelamin-A/C. Together with NEMP1, contributes to nuclear envelope stiffness in germ cells. This Mus musculus (Mouse) protein is Emerin (Emd).